Consider the following 270-residue polypeptide: Cystinosin homolog (270 aa).

In terms of domain architecture, PQ-loop 1 spans 9–75 (LEISYEIVGW…LYFSPVIQKQ (67 aa)). The chain crosses the membrane as a helical span at residues 14–34 (EIVGWIAFASWSISFYPQLIL). The N-linked (GlcNAc...) asparagine glycan is linked to N52. Helical transmembrane passes span 93–113 (VAFSIHAVVMTAVTLFQIFIY), 123–143 (LAIGIVVVVWGFAAICFFIAL), and 148–168 (WLWLISIFNSIQVFMTCVKYI). Residues 151–213 (LISIFNSIQV…IQSIDQNSWK (63 aa)) enclose the PQ-loop 2 domain. N174 is a glycosylation site (N-linked (GlcNAc...) asparagine). Transmembrane regions (helical) follow at residues 180 to 200 (TVGWSIGNILLDFTGGLANYL) and 223 to 243 (LLSLISIFFDILFMFQHYVLY). The interval 250–270 (KSPETGEESNEPLIDSSHEHV) is disordered.

This sequence belongs to the cystinosin (TC 2.A.43.1) family.

The protein localises to the lysosome membrane. Functionally, thought to transport cystine out of lysosomes. In Arabidopsis thaliana (Mouse-ear cress), this protein is Cystinosin homolog.